Consider the following 689-residue polypeptide: Beta-adrenergic receptor kinase 1 (689 aa).

The interval 1 to 190 (MADLEAVLAD…ELNIHLTMND (190 aa)) is N-terminal. Positions 54–175 (TFEKIFSQKL…IESDKFTRFC (122 aa)) constitute an RGS domain. Residues 191-453 (FSVHRIIGRG…AQEIKESPFF (263 aa)) enclose the Protein kinase domain. ATP is bound by residues 197-205 (IGRGGFGEV) and lysine 220. Catalysis depends on aspartate 317, which acts as the Proton acceptor. The AGC-kinase C-terminal domain maps to 454–521 (RSLDWQMVFL…TISERWQQEV (68 aa)). Residues 558 to 652 (DCIMHGYMSK…WKKELRDAYR (95 aa)) form the PH domain. A Phosphoserine modification is found at serine 670.

This sequence belongs to the protein kinase superfamily. AGC Ser/Thr protein kinase family. GPRK subfamily. As to quaternary structure, interacts with the heterodimer formed by GNB1 and GNG2. Interacts with GIT1. Interacts with, and phosphorylates chemokine-stimulated CCR5. Interacts with ARRB1. Interacts with LPAR1 and LPAR2. Interacts with RALA in response to LPAR1 activation. ADRBK1 and RALA mutually inhibit each other's binding to LPAR1. Interacts with ADRB2. As to expression, expressed at low levels in brain cortex, hippocampus, striatum, hypothalamus, cerebellum and brainstem (at protein level).

The protein localises to the cytoplasm. It localises to the cell membrane. Its subcellular location is the postsynapse. It is found in the presynapse. It catalyses the reaction [beta-adrenergic receptor] + ATP = [beta-adrenergic receptor]-phosphate + ADP + H(+). Its activity is regulated as follows. In contrast to other AGC family kinases, the catalytic activity is solely regulated by the binding of substrates and ligands, not by phosphorylation of the kinase domain. Its function is as follows. Specifically phosphorylates the agonist-occupied form of the beta-adrenergic and closely related receptors, probably inducing a desensitization of them. Key regulator of LPAR1 signaling. Competes with RALA for binding to LPAR1 thus affecting the signaling properties of the receptor. Desensitizes LPAR1 and LPAR2 in a phosphorylation-independent manner. Positively regulates ciliary smoothened (SMO)-dependent Hedgehog (Hh) signaling pathway by facilitating the trafficking of SMO into the cilium and the stimulation of SMO activity. Inhibits relaxation of airway smooth muscle in response to blue light. The polypeptide is Beta-adrenergic receptor kinase 1 (Rattus norvegicus (Rat)).